The following is a 285-amino-acid chain: Acetyl-coenzyme A carboxylase carboxyl transferase subunit beta (285 aa).

The 257-residue stretch at 29–285 (IMTKCPKCKK…ILKIHQEVTK (257 aa)) folds into the CoA carboxyltransferase N-terminal domain. The Zn(2+) site is built by Cys33, Cys36, Cys52, and Cys55. Residues 33–55 (CPKCKKIMYTKELAENLNVCFNC) form a C4-type zinc finger.

This sequence belongs to the AccD/PCCB family. Acetyl-CoA carboxylase is a heterohexamer composed of biotin carboxyl carrier protein (AccB), biotin carboxylase (AccC) and two subunits each of ACCase subunit alpha (AccA) and ACCase subunit beta (AccD). The cofactor is Zn(2+).

Its subcellular location is the cytoplasm. It catalyses the reaction N(6)-carboxybiotinyl-L-lysyl-[protein] + acetyl-CoA = N(6)-biotinyl-L-lysyl-[protein] + malonyl-CoA. It participates in lipid metabolism; malonyl-CoA biosynthesis; malonyl-CoA from acetyl-CoA: step 1/1. Component of the acetyl coenzyme A carboxylase (ACC) complex. Biotin carboxylase (BC) catalyzes the carboxylation of biotin on its carrier protein (BCCP) and then the CO(2) group is transferred by the transcarboxylase to acetyl-CoA to form malonyl-CoA. In Staphylococcus aureus (strain Newman), this protein is Acetyl-coenzyme A carboxylase carboxyl transferase subunit beta.